A 172-amino-acid polypeptide reads, in one-letter code: Peroxiredoxin AHP1 (172 aa).

The Thioredoxin domain maps to 4 to 171 (LQPGDSFPAN…VLTVLGNQGK (168 aa)). K44 is covalently cross-linked (Glycyl lysine isopeptide (Lys-Gly) (interchain with G-Cter in URM1)). C60 functions as the Cysteine sulfenic acid (-SOH) intermediate in the catalytic mechanism. C60 carries the post-translational modification Cysteine persulfide. Residues K63, K99, K141, K156, and K171 each participate in a glycyl lysine isopeptide (Lys-Gly) (interchain with G-Cter in URM1) cross-link.

The protein belongs to the peroxiredoxin family. Prx5 subfamily. As to quaternary structure, homodimer; disulfide-linked, upon oxidation. Conjugated to URM1, a ubiquitin-like protein, in response to oxidative stresses. The attachment of URM1 to lysine residues exclusively depends on the presence of a peroxidatic cysteine in the target protein, with low specificity for the particular residue, motif, or structural context at which urmylation can occur. The URM1-conjugation reaction is mechanistically and directly coupled to the process of cysteine persulfidation, transfering the sulfur atom of the URM1 thiocarboxyl group to redox-active cysteine residues in the target protein if it is exposed to oxidative conditions. In terms of processing, persulfidated on specific redox-active cysteine residues. Persulfidation (also called protein S-sulfhydration) may provide a molecular mechanism that enables cells to protect vulnerable cysteine residues from reactive oxygen species (ROS) under stress conditions.

It is found in the cytoplasm. The catalysed reaction is a hydroperoxide + [thioredoxin]-dithiol = an alcohol + [thioredoxin]-disulfide + H2O. In terms of biological role, thiol-specific peroxidase that catalyzes the reduction of hydrogen peroxide and organic hydroperoxides to water and alcohols, respectively. Plays a role in cell protection against oxidative stress by detoxifying peroxides and as sensor of hydrogen peroxide-mediated signaling events. Preferentially eliminates organic peroxides rather than hydrogen peroxide. Relays alkyl hydroperoxides as a signal to the transcription factor CAD1/YAP2 by inducing the formation of intramolecular disulfide bonds in CAD1, which causes its nuclear accumulation and activation. Involved in cellular Mn(2+) homeostasis. The protein is Peroxiredoxin AHP1 (AHP1) of Chaetomium thermophilum (strain DSM 1495 / CBS 144.50 / IMI 039719) (Thermochaetoides thermophila).